The following is a 362-amino-acid chain: Methylthioribose-1-phosphate isomerase (362 aa).

Residues R53 to A55, R90, and Q201 contribute to the substrate site. The active-site Proton donor is D241. N251–K252 serves as a coordination point for substrate.

It belongs to the eIF-2B alpha/beta/delta subunits family. MtnA subfamily.

It carries out the reaction 5-(methylsulfanyl)-alpha-D-ribose 1-phosphate = 5-(methylsulfanyl)-D-ribulose 1-phosphate. Its pathway is amino-acid biosynthesis; L-methionine biosynthesis via salvage pathway; L-methionine from S-methyl-5-thio-alpha-D-ribose 1-phosphate: step 1/6. In terms of biological role, catalyzes the interconversion of methylthioribose-1-phosphate (MTR-1-P) into methylthioribulose-1-phosphate (MTRu-1-P). The sequence is that of Methylthioribose-1-phosphate isomerase from Dechloromonas aromatica (strain RCB).